The following is an 89-amino-acid chain: Small ribosomal subunit protein uS15 (89 aa).

The segment at 1-23 (MSLDTTEKQQLINANQTHGTDTG) is disordered. Residues 8–23 (KQQLINANQTHGTDTG) are compositionally biased toward polar residues.

The protein belongs to the universal ribosomal protein uS15 family. As to quaternary structure, part of the 30S ribosomal subunit. Forms a bridge to the 50S subunit in the 70S ribosome, contacting the 23S rRNA.

In terms of biological role, one of the primary rRNA binding proteins, it binds directly to 16S rRNA where it helps nucleate assembly of the platform of the 30S subunit by binding and bridging several RNA helices of the 16S rRNA. Its function is as follows. Forms an intersubunit bridge (bridge B4) with the 23S rRNA of the 50S subunit in the ribosome. In Prochlorococcus marinus (strain MIT 9313), this protein is Small ribosomal subunit protein uS15.